The sequence spans 424 residues: COUP transcription factor 1 (424 aa).

The tract at residues 1–82 (MAMVVSSWRD…QGPPGSGQSQ (82 aa)) is disordered. The span at 39–68 (EQQQQQAGSGAPHTPQTPGQPGAPATPGTA) shows a compositional bias: low complexity. The segment at residues 84 to 159 (HIECVVCGDK…VGMRREAVQR (76 aa)) is a DNA-binding region (nuclear receptor). 2 consecutive NR C4-type zinc fingers follow at residues 87–107 (CVVCGDKSSGKHYGQFTCEGC) and 123–147 (CRANRNCPIDQHHRNQCQYCRLKKC). In terms of domain architecture, NR LBD spans 185 to 411 (YLSGYISLLL…TLIRDMLLSG (227 aa)).

The protein belongs to the nuclear hormone receptor family. NR2 subfamily. Binds DNA as dimer; homodimer and probable heterodimer with NR2F6. Interacts with GTF2B; this interaction is direct. Interacts with COPS2.

The protein resides in the nucleus. Coup (chicken ovalbumin upstream promoter) transcription factor binds to the ovalbumin promoter and, in conjunction with another protein (S300-II) stimulates initiation of transcription. Binds to both direct repeats and palindromes of the 5'-AGGTCA-3' motif. Represses transcriptional activity of LHCG. In Bos taurus (Bovine), this protein is COUP transcription factor 1 (NR2F1).